A 106-amino-acid chain; its full sequence is Large ribosomal subunit protein eL42 (106 aa).

Positions 1–29 (MVNIPKTRRTYCKGKACRKHTPHKVTQYK) are enriched in basic residues. Residues 1–56 (MVNIPKTRRTYCKGKACRKHTPHKVTQYKKGKDSLSAQGKRRYDRKQSGYGGQTKP) form a disordered region.

It belongs to the eukaryotic ribosomal protein eL42 family.

This chain is Large ribosomal subunit protein eL42 (RPL44), found in Cryptococcus neoformans var. neoformans serotype D (strain B-3501A) (Filobasidiella neoformans).